Here is an 87-residue protein sequence, read N- to C-terminus: DNA-directed RNA polymerase subunit Rpo5 (87 aa).

The protein belongs to the archaeal Rpo5/eukaryotic RPB5 RNA polymerase subunit family. As to quaternary structure, part of the RNA polymerase complex.

Its subcellular location is the cytoplasm. It carries out the reaction RNA(n) + a ribonucleoside 5'-triphosphate = RNA(n+1) + diphosphate. DNA-dependent RNA polymerase (RNAP) catalyzes the transcription of DNA into RNA using the four ribonucleoside triphosphates as substrates. In Thermoplasma acidophilum (strain ATCC 25905 / DSM 1728 / JCM 9062 / NBRC 15155 / AMRC-C165), this protein is DNA-directed RNA polymerase subunit Rpo5.